A 510-amino-acid polypeptide reads, in one-letter code: UDP-N-acetylmuramoylalanine--D-glutamate ligase (510 aa).

An ATP-binding site is contributed by 138–144 (GTNGKTT). Residues 294-316 (FDEPAPAPRRKKDAPPPTRAGGR) form a disordered region.

Belongs to the MurCDEF family.

The protein resides in the cytoplasm. The enzyme catalyses UDP-N-acetyl-alpha-D-muramoyl-L-alanine + D-glutamate + ATP = UDP-N-acetyl-alpha-D-muramoyl-L-alanyl-D-glutamate + ADP + phosphate + H(+). It participates in cell wall biogenesis; peptidoglycan biosynthesis. In terms of biological role, cell wall formation. Catalyzes the addition of glutamate to the nucleotide precursor UDP-N-acetylmuramoyl-L-alanine (UMA). This chain is UDP-N-acetylmuramoylalanine--D-glutamate ligase, found in Bordetella pertussis (strain Tohama I / ATCC BAA-589 / NCTC 13251).